The following is a 165-amino-acid chain: uncharacterized protein (165 aa).

This is an uncharacterized protein from Rickettsia conorii (strain ATCC VR-613 / Malish 7).